We begin with the raw amino-acid sequence, 370 residues long: Dual-specificity RNA methyltransferase RlmN (370 aa).

Glutamate 93 serves as the catalytic Proton acceptor. The Radical SAM core domain maps to 99–337 (EEGRGTLCVS…VTTVRKTRGD (239 aa)). The cysteines at positions 106 and 343 are disulfide-linked. [4Fe-4S] cluster is bound by residues cysteine 113, cysteine 117, and cysteine 120. Residues 167–168 (GE), serine 199, 221–223 (SLH), and asparagine 300 each bind S-adenosyl-L-methionine. The S-methylcysteine intermediate role is filled by cysteine 343.

Belongs to the radical SAM superfamily. RlmN family. The cofactor is [4Fe-4S] cluster.

The protein resides in the cytoplasm. It carries out the reaction adenosine(2503) in 23S rRNA + 2 reduced [2Fe-2S]-[ferredoxin] + 2 S-adenosyl-L-methionine = 2-methyladenosine(2503) in 23S rRNA + 5'-deoxyadenosine + L-methionine + 2 oxidized [2Fe-2S]-[ferredoxin] + S-adenosyl-L-homocysteine. The catalysed reaction is adenosine(37) in tRNA + 2 reduced [2Fe-2S]-[ferredoxin] + 2 S-adenosyl-L-methionine = 2-methyladenosine(37) in tRNA + 5'-deoxyadenosine + L-methionine + 2 oxidized [2Fe-2S]-[ferredoxin] + S-adenosyl-L-homocysteine. Specifically methylates position 2 of adenine 2503 in 23S rRNA and position 2 of adenine 37 in tRNAs. m2A2503 modification seems to play a crucial role in the proofreading step occurring at the peptidyl transferase center and thus would serve to optimize ribosomal fidelity. This Francisella tularensis subsp. novicida (strain U112) protein is Dual-specificity RNA methyltransferase RlmN.